Reading from the N-terminus, the 365-residue chain is P43 5S RNA-binding protein (365 aa).

9 consecutive C2H2-type zinc fingers follow at residues 15–39 (FRCPAAGCKAVYRKEGKLRDHMAGH), 45–69 (WKCGKKDCGKMFARKRQIQKHMKRH), 75–100 (HSCPTAGCKMTFSTKKSLSRHKLYKH), 106–130 (LKCSVPGCKRSFRKKRALRIHVSEH), 136–160 (SVCDVPGCGWKSTSAAKLAAHHRRH), 163–187 (YRCSYEDCQTVSPTWTALQTHLKKH), 191–213 (LQCAACKKPFKKASALRRHKATH), 220–245 (LPCPRQDCDKIFSTVFNLTHHLRKVH), and 251–275 (HRCPHSNCTRSFAMRESLVRHLVVH).

In terms of assembly, the 42S RNP particle comprises four subunits each of which contains one molecule of 5S RNA, three molecules of tRNA, two molecules of p50 (EF1-alpha) and one molecule of the 5S RNA binding protein 43.

Its function is as follows. p43 is a 5S RNA binding protein which is a major constituent of oocytes and comprises part of a 42S ribonucleoprotein storage particle. The sequence is that of P43 5S RNA-binding protein from Xenopus borealis (Kenyan clawed frog).